We begin with the raw amino-acid sequence, 310 residues long: Putative methyltransferase mtx subunit H (310 aa).

It belongs to the MtrH family. May be part of a complex composed of 3 subunits; MtxA, MtxH and MtxX.

The chain is Putative methyltransferase mtx subunit H (mtxH) from Methanosarcina barkeri (strain Fusaro / DSM 804).